Here is a 69-residue protein sequence, read N- to C-terminus: Putative membrane protein insertion efficiency factor (69 aa).

This sequence belongs to the UPF0161 family.

The protein resides in the cell inner membrane. Its function is as follows. Could be involved in insertion of integral membrane proteins into the membrane. In Nitrosomonas europaea (strain ATCC 19718 / CIP 103999 / KCTC 2705 / NBRC 14298), this protein is Putative membrane protein insertion efficiency factor.